The chain runs to 566 residues: MQYTKISHMNPAERVEALTASLVSLSSVNGTVGEGTKADFIKEVITSYPYFQENPSHVWEQAIPNDPYKRKNIFAFIKGHGESRNTVIYHAHLDTVGIEDFGPLKDIAFDCEKLAEYFSRYEFDQDVQRDAKSGEWMFGRGSVDMQSGIAVHLANLLHFSENLETLPGNVLFMANPDEESQHSGILASISELNRLKKEKQLHYLAAINTDFITPLYDGDQTRYIYTGAAGKLLPCFYIYGREVHVGDTLAGIDPNFISSEITSRLHNNIHLAEKVEGELVLPPSCLYQRDNKESYNVQTAVSTSLYFNCFIYERTAKEMMDLLIEVTEEACRETEQKLSDYYEEYVKRANLPKKHLSWGIQVYSLEQYLEKLRNRGIDPEQCIEQTFKANEHLELRMRCFQAIEELQKLDPDQGAKVILFYAPPYLPHNYLKEDSARDQLLQHVIKEAADKTAESTGETFVFKKFFPYLADGSFLSLHETDGEIDSFIRNFPGWNMIGTIPFKDIRKLNIPSINMGVYGKDGHKWTERVYKPYTFHVLPLLIQQTTVHLLQSYRMTITAKEPKGEG.

In terms of biological role, involved in arginine degradative pathway. This chain is Protein RocB (rocB), found in Bacillus subtilis (strain 168).